The primary structure comprises 116 residues: Chondroitin proteoglycan 7 (116 aa).

An N-terminal signal peptide occupies residues 1 to 19; the sequence is MQTITILALIACVAVPIFA. Residues 29-102 are disordered; the sequence is DVVESSGEGS…NAVVASDSPK (74 aa). 2 stretches are compositionally biased toward low complexity: residues 32–41 and 48–58; these read ESSGEGSGES and VESSGEGSGES. Residues serine 68, serine 72, serine 76, serine 84, and serine 88 are each glycosylated (O-linked (Xyl...) (chondroitin sulfate) serine).

The sequence is that of Chondroitin proteoglycan 7 from Caenorhabditis elegans.